Consider the following 255-residue polypeptide: 3-deoxy-manno-octulosonate cytidylyltransferase (255 aa).

It belongs to the KdsB family.

The protein localises to the cytoplasm. The enzyme catalyses 3-deoxy-alpha-D-manno-oct-2-ulosonate + CTP = CMP-3-deoxy-beta-D-manno-octulosonate + diphosphate. The protein operates within nucleotide-sugar biosynthesis; CMP-3-deoxy-D-manno-octulosonate biosynthesis; CMP-3-deoxy-D-manno-octulosonate from 3-deoxy-D-manno-octulosonate and CTP: step 1/1. Its pathway is bacterial outer membrane biogenesis; lipopolysaccharide biosynthesis. Its function is as follows. Activates KDO (a required 8-carbon sugar) for incorporation into bacterial lipopolysaccharide in Gram-negative bacteria. This Polaromonas sp. (strain JS666 / ATCC BAA-500) protein is 3-deoxy-manno-octulosonate cytidylyltransferase.